The primary structure comprises 281 residues: Merozoite surface protein 2 (281 aa).

Positions 1–20 are cleaved as a signal peptide; it reads MKVIKTLSIINFFIFVTFNI. Asparagine 22 and asparagine 36 each carry an N-linked (GlcNAc...) asparagine glycan. Residues 42 to 242 are disordered; sequence SMEESNPPTG…DSQKECTDGN (201 aa). Residues 44-207 form a polymorphic region region; it reads EESNPPTGAS…EQTESPELQS (164 aa). A run of 3 repeats spans residues 51-58, 59-66, and 67-74. Positions 51 to 74 are 3 X 8 AA tandem repeats of G-A-S-G-R-A-G-A; the sequence is GASGRAGAGASGRAGAGASGRAGA. Positions 54–76 are enriched in gly residues; it reads GRAGAGASGRAGAGASGRAGAGA. The span at 77–133 shows a compositional bias: low complexity; sequence GAVASAGSGDGAVASAGNGANPGADAKRSTSTPATTTTTTTTNDAEASTSTSSENPN. Composition is skewed to polar residues over residues 150–174 and 181–209; these read NKAN…NVPP and KSPT…QSAP. Asparagine 158 is a glycosylation site (N-linked (GlcNAc...) asparagine). An N-linked (GlcNAc...) asparagine glycan is attached at asparagine 230. Cysteine 238 and cysteine 246 are oxidised to a cystine. N-linked (GlcNAc...) asparagine glycosylation is found at asparagine 254 and asparagine 255. A lipid anchor (GPI-anchor amidated asparagine) is attached at asparagine 255. Positions 256-281 are cleaved as a propeptide — removed in mature form; sequence SSNIASINKFVVLISATLVLSFAIFI.

The protein localises to the cell membrane. Its function is as follows. May play a role in the merozoite attachment to the erythrocyte. This chain is Merozoite surface protein 2, found in Plasmodium falciparum (isolate thtn / Thailand).